The primary structure comprises 55 residues: ATP synthase F(0) complex subunit 8 (55 aa).

Residues 4–24 (LNPAPWFMIFMFTWAIFLTIL) form a helical membrane-spanning segment. A disordered region spans residues 34 to 55 (PNEPSPQGMTTPKTAPWNWPWH).

The protein belongs to the ATPase protein 8 family. In terms of assembly, component of the ATP synthase complex composed at least of ATP5F1A/subunit alpha, ATP5F1B/subunit beta, ATP5MC1/subunit c (homooctomer), MT-ATP6/subunit a, MT-ATP8/subunit 8, ATP5ME/subunit e, ATP5MF/subunit f, ATP5MG/subunit g, ATP5MK/subunit k, ATP5MJ/subunit j, ATP5F1C/subunit gamma, ATP5F1D/subunit delta, ATP5F1E/subunit epsilon, ATP5PF/subunit F6, ATP5PB/subunit b, ATP5PD/subunit d, ATP5PO/subunit OSCP. ATP synthase complex consists of a soluble F(1) head domain (subunits alpha(3) and beta(3)) - the catalytic core - and a membrane F(0) domain - the membrane proton channel (subunits c, a, 8, e, f, g, k and j). These two domains are linked by a central stalk (subunits gamma, delta, and epsilon) rotating inside the F1 region and a stationary peripheral stalk (subunits F6, b, d, and OSCP).

The protein localises to the mitochondrion membrane. In terms of biological role, subunit 8, of the mitochondrial membrane ATP synthase complex (F(1)F(0) ATP synthase or Complex V) that produces ATP from ADP in the presence of a proton gradient across the membrane which is generated by electron transport complexes of the respiratory chain. ATP synthase complex consist of a soluble F(1) head domain - the catalytic core - and a membrane F(1) domain - the membrane proton channel. These two domains are linked by a central stalk rotating inside the F(1) region and a stationary peripheral stalk. During catalysis, ATP synthesis in the catalytic domain of F(1) is coupled via a rotary mechanism of the central stalk subunits to proton translocation. In vivo, can only synthesize ATP although its ATP hydrolase activity can be activated artificially in vitro. Part of the complex F(0) domain. The polypeptide is ATP synthase F(0) complex subunit 8 (Gadus morhua (Atlantic cod)).